Reading from the N-terminus, the 302-residue chain is N-acetylmuramic acid 6-phosphate etherase (302 aa).

The SIS domain occupies 58-221; sequence IGESFLNGGR…STGAMVKTGK (164 aa). Glu-86 acts as the Proton donor in catalysis. Glu-117 is a catalytic residue.

The protein belongs to the GCKR-like family. MurNAc-6-P etherase subfamily. Homodimer.

It carries out the reaction N-acetyl-D-muramate 6-phosphate + H2O = N-acetyl-D-glucosamine 6-phosphate + (R)-lactate. It functions in the pathway amino-sugar metabolism; N-acetylmuramate degradation. Specifically catalyzes the cleavage of the D-lactyl ether substituent of MurNAc 6-phosphate, producing GlcNAc 6-phosphate and D-lactate. The chain is N-acetylmuramic acid 6-phosphate etherase from Clostridium botulinum (strain Langeland / NCTC 10281 / Type F).